Reading from the N-terminus, the 703-residue chain is Zinc finger protein 750 (703 aa).

The CCHC-type zinc-finger motif lies at 25-51; the sequence is YKCFQCPFTCNEKSHLFNHMKYGLCKN. The Zn(2+) site is built by Cys-27, Cys-30, His-43, and Cys-49. Disordered regions lie at residues 60-96, 121-147, 362-617, and 633-703; these read DRVPKCSKPNSSDPKQTNQPDPVVKPTSSKPVPSGLS, GPHRCLGQKPTPHKEAAPPSPAPEAAV, PSKL…EQKQ, and NVEP…TRVS. The segment covering 67-78 has biased composition (polar residues); it reads KPNSSDPKQTNQ. The span at 79–93 shows a compositional bias: low complexity; sequence PDPVVKPTSSKPVPS. Basic and acidic residues predominate over residues 375-399; sequence TELEKQSPTPEAKEPSKDGQRDTEG. Over residues 418–428 the composition is skewed to polar residues; the sequence is SPTNFTQTSQP. Residues 583-592 show a composition bias toward low complexity; the sequence is SSGDGPDPSS. Basic and acidic residues predominate over residues 605 to 616; sequence QDIRAADSDEQK.

The protein localises to the nucleus. Its function is as follows. Transcription factor involved in epidermis differentiation. Required for terminal epidermal differentiation: acts downstream of p63/TP63 and activates expression of late epidermal differentiation genes. Specifically binds to the promoter of KLF4 and promotes its expression. The polypeptide is Zinc finger protein 750 (ZNF750) (Bos taurus (Bovine)).